Reading from the N-terminus, the 158-residue chain is Transcription elongation factor GreA (158 aa).

Residues Asp24 to Leu43 are compositionally biased toward basic and acidic residues. Residues Asp24–Ala47 form a disordered region. Positions Glu48 to Glu68 form a coiled coil.

Belongs to the GreA/GreB family.

Its function is as follows. Necessary for efficient RNA polymerase transcription elongation past template-encoded arresting sites. The arresting sites in DNA have the property of trapping a certain fraction of elongating RNA polymerases that pass through, resulting in locked ternary complexes. Cleavage of the nascent transcript by cleavage factors such as GreA or GreB allows the resumption of elongation from the new 3'terminus. GreA releases sequences of 2 to 3 nucleotides. The polypeptide is Transcription elongation factor GreA (Christiangramia forsetii (strain DSM 17595 / CGMCC 1.15422 / KT0803) (Gramella forsetii)).